Here is a 478-residue protein sequence, read N- to C-terminus: Chromosomal replication initiator protein DnaA (478 aa).

The domain I, interacts with DnaA modulators stretch occupies residues Met-1–Tyr-71. Positions Tyr-71–Gly-136 are domain II. A domain III, AAA+ region region spans residues Met-137–Ala-353. ATP-binding residues include Gly-181, Gly-183, Lys-184, and Thr-185. A domain IV, binds dsDNA region spans residues Glu-354–Leu-478.

This sequence belongs to the DnaA family. As to quaternary structure, oligomerizes as a right-handed, spiral filament on DNA at oriC.

The protein resides in the cytoplasm. In terms of biological role, plays an essential role in the initiation and regulation of chromosomal replication. ATP-DnaA binds to the origin of replication (oriC) to initiate formation of the DNA replication initiation complex once per cell cycle. Binds the DnaA box (a 9 base pair repeat at the origin) and separates the double-stranded (ds)DNA. Forms a right-handed helical filament on oriC DNA; dsDNA binds to the exterior of the filament while single-stranded (ss)DNA is stabiized in the filament's interior. The ATP-DnaA-oriC complex binds and stabilizes one strand of the AT-rich DNA unwinding element (DUE), permitting loading of DNA polymerase. After initiation quickly degrades to an ADP-DnaA complex that is not apt for DNA replication. Binds acidic phospholipids. This chain is Chromosomal replication initiator protein DnaA, found in Chloroflexus aggregans (strain MD-66 / DSM 9485).